Here is a 103-residue protein sequence, read N- to C-terminus: Large ribosomal subunit protein bL21 (103 aa).

The protein belongs to the bacterial ribosomal protein bL21 family. As to quaternary structure, part of the 50S ribosomal subunit. Contacts protein L20.

This protein binds to 23S rRNA in the presence of protein L20. The polypeptide is Large ribosomal subunit protein bL21 (Erwinia tasmaniensis (strain DSM 17950 / CFBP 7177 / CIP 109463 / NCPPB 4357 / Et1/99)).